Here is a 496-residue protein sequence, read N- to C-terminus: Lysine--tRNA ligase (496 aa).

The Mg(2+) site is built by glutamate 408 and glutamate 415.

It belongs to the class-II aminoacyl-tRNA synthetase family. In terms of assembly, homodimer. Requires Mg(2+) as cofactor.

Its subcellular location is the cytoplasm. It carries out the reaction tRNA(Lys) + L-lysine + ATP = L-lysyl-tRNA(Lys) + AMP + diphosphate. The chain is Lysine--tRNA ligase from Legionella pneumophila (strain Corby).